The primary structure comprises 420 residues: UDP-N-acetylglucosamine 1-carboxyvinyltransferase (420 aa).

22-23 (KN) is a binding site for phosphoenolpyruvate. Arg93 serves as a coordination point for UDP-N-acetyl-alpha-D-glucosamine. Cys117 serves as the catalytic Proton donor. Cys117 bears the 2-(S-cysteinyl)pyruvic acid O-phosphothioketal mark. Residues 162–165 (KVSV), Asp307, and Ile329 contribute to the UDP-N-acetyl-alpha-D-glucosamine site.

Belongs to the EPSP synthase family. MurA subfamily.

The protein resides in the cytoplasm. The catalysed reaction is phosphoenolpyruvate + UDP-N-acetyl-alpha-D-glucosamine = UDP-N-acetyl-3-O-(1-carboxyvinyl)-alpha-D-glucosamine + phosphate. It participates in cell wall biogenesis; peptidoglycan biosynthesis. Cell wall formation. Adds enolpyruvyl to UDP-N-acetylglucosamine. The protein is UDP-N-acetylglucosamine 1-carboxyvinyltransferase of Actinobacillus succinogenes (strain ATCC 55618 / DSM 22257 / CCUG 43843 / 130Z).